The primary structure comprises 1158 residues: ATP-dependent helicase/deoxyribonuclease subunit B (1158 aa).

The region spanning 1-275 (MTLHAYLGRA…QYFNQLYRFN (275 aa)) is the UvrD-like helicase ATP-binding domain. Residue 8-15 (GRAGTGKS) coordinates ATP. The UvrD-like helicase C-terminal domain occupies 269–583 (NQLYRFNNQD…SIGTMDLAKV (315 aa)). The [4Fe-4S] cluster site is built by cysteine 784, cysteine 1112, cysteine 1115, and cysteine 1121.

It belongs to the helicase family. AddB/RexB type 1 subfamily. In terms of assembly, heterodimer of AddA and AddB. It depends on Mg(2+) as a cofactor. The cofactor is [4Fe-4S] cluster.

Functionally, the heterodimer acts as both an ATP-dependent DNA helicase and an ATP-dependent, dual-direction single-stranded exonuclease. Recognizes the chi site generating a DNA molecule suitable for the initiation of homologous recombination. The AddB subunit has 5' -&gt; 3' nuclease activity but not helicase activity. This chain is ATP-dependent helicase/deoxyribonuclease subunit B, found in Staphylococcus aureus (strain COL).